A 268-amino-acid polypeptide reads, in one-letter code: Type-5 uracil-DNA glycosylase (268 aa).

The segment at 1–29 (MHPKTGRAFRSPVEPGSGWPGDPATPQTP) is disordered. Residues C57, C60, C161, and C176 each contribute to the [4Fe-4S] cluster site.

This sequence belongs to the uracil-DNA glycosylase (UDG) superfamily. Type 5 (UDGb) family.

Its function is as follows. DNA glycosylase with broad substrate specificity. In Mycobacterium bovis (strain ATCC BAA-935 / AF2122/97), this protein is Type-5 uracil-DNA glycosylase.